A 225-amino-acid chain; its full sequence is Phosphatidylserine decarboxylase proenzyme (225 aa).

Catalysis depends on S195, which acts as the Schiff-base intermediate with substrate; via pyruvic acid. S195 bears the Pyruvic acid (Ser); by autocatalysis mark.

The protein belongs to the phosphatidylserine decarboxylase family. PSD-A subfamily. Heterodimer of a large membrane-associated beta subunit and a small pyruvoyl-containing alpha subunit. The cofactor is pyruvate. Is synthesized initially as an inactive proenzyme. Formation of the active enzyme involves a self-maturation process in which the active site pyruvoyl group is generated from an internal serine residue via an autocatalytic post-translational modification. Two non-identical subunits are generated from the proenzyme in this reaction, and the pyruvate is formed at the N-terminus of the alpha chain, which is derived from the carboxyl end of the proenzyme. The post-translation cleavage follows an unusual pathway, termed non-hydrolytic serinolysis, in which the side chain hydroxyl group of the serine supplies its oxygen atom to form the C-terminus of the beta chain, while the remainder of the serine residue undergoes an oxidative deamination to produce ammonia and the pyruvoyl prosthetic group on the alpha chain.

It localises to the cell membrane. It carries out the reaction a 1,2-diacyl-sn-glycero-3-phospho-L-serine + H(+) = a 1,2-diacyl-sn-glycero-3-phosphoethanolamine + CO2. The protein operates within phospholipid metabolism; phosphatidylethanolamine biosynthesis; phosphatidylethanolamine from CDP-diacylglycerol: step 2/2. Functionally, catalyzes the formation of phosphatidylethanolamine (PtdEtn) from phosphatidylserine (PtdSer). The chain is Phosphatidylserine decarboxylase proenzyme from Gluconobacter oxydans (strain 621H) (Gluconobacter suboxydans).